Here is a 120-residue protein sequence, read N- to C-terminus: Large ribosomal subunit protein uL18 (120 aa).

The protein belongs to the universal ribosomal protein uL18 family. In terms of assembly, part of the 50S ribosomal subunit; part of the 5S rRNA/L5/L18/L25 subcomplex. Contacts the 5S and 23S rRNAs.

Its function is as follows. This is one of the proteins that bind and probably mediate the attachment of the 5S RNA into the large ribosomal subunit, where it forms part of the central protuberance. This is Large ribosomal subunit protein uL18 from Synechococcus elongatus (strain ATCC 33912 / PCC 7942 / FACHB-805) (Anacystis nidulans R2).